Consider the following 136-residue polypeptide: Small ribosomal subunit protein uS19 (136 aa).

Residues 114–136 are disordered; sequence RSRVSHGSAGVGATRSSKFVPLK.

The protein belongs to the universal ribosomal protein uS19 family.

In terms of biological role, protein S19 forms a complex with S13 that binds strongly to the 16S ribosomal RNA. In Methanosarcina acetivorans (strain ATCC 35395 / DSM 2834 / JCM 12185 / C2A), this protein is Small ribosomal subunit protein uS19.